The chain runs to 94 residues: uncharacterized protein (94 aa).

As to expression, expressed in heart.

This is an uncharacterized protein from Homo sapiens (Human).